The sequence spans 246 residues: Ribonuclease PH (246 aa).

Phosphate-binding positions include Arg-91 and Gly-129–Arg-131.

Belongs to the RNase PH family. In terms of assembly, homohexameric ring arranged as a trimer of dimers.

The catalysed reaction is tRNA(n+1) + phosphate = tRNA(n) + a ribonucleoside 5'-diphosphate. Phosphorolytic 3'-5' exoribonuclease that plays an important role in tRNA 3'-end maturation. Removes nucleotide residues following the 3'-CCA terminus of tRNAs; can also add nucleotides to the ends of RNA molecules by using nucleoside diphosphates as substrates, but this may not be physiologically important. Probably plays a role in initiation of 16S rRNA degradation (leading to ribosome degradation) during starvation. In Burkholderia ambifaria (strain MC40-6), this protein is Ribonuclease PH.